The following is a 225-amino-acid chain: Cardiotrophin-like cytokine factor 1 (225 aa).

Positions Met-1 to Ala-27 are cleaved as a signal peptide. A glycan (N-linked (GlcNAc...) asparagine) is linked at Asn-29.

Belongs to the IL-6 superfamily. In terms of assembly, forms a heteromeric complex with cardiotrophin-like cytokine CRLF1/CLF-1; the CRLF1-CLCF1 complex is a ligand for the ciliary neurotrophic factor receptor/CNTFR. The CRLF1-CLCF1 heterodimer binds SORL1 (via N-terminal ectodomain); within this complex, the interaction is mediated predominantly by the CRLF1 moiety. The tripartite signaling complex formed by CRLF1, CLCF1 and CNTFR also binds SORL1.

The protein localises to the secreted. In complex with CRLF1, forms a heterodimeric neurotropic cytokine that plays a crucial role during neuronal development. Also stimulates B-cells. Binds to and activates the ILST/gp130 receptor. The protein is Cardiotrophin-like cytokine factor 1 (Clcf1) of Mus musculus (Mouse).